Here is a 116-residue protein sequence, read N- to C-terminus: Cell cycle protein GpsB (116 aa).

Positions 32–69 (LDDVIKDYETYSALVKELREENSRLKQELSKRMQEAPN) form a coiled coil. The tract at residues 57-78 (KQELSKRMQEAPNSTASQVHQS) is disordered. Over residues 67–78 (APNSTASQVHQS) the composition is skewed to polar residues.

It belongs to the GpsB family. In terms of assembly, forms polymers through the coiled coil domains. Interacts with PBP1, MreC and EzrA.

It localises to the cytoplasm. In terms of biological role, divisome component that associates with the complex late in its assembly, after the Z-ring is formed, and is dependent on DivIC and PBP2B for its recruitment to the divisome. Together with EzrA, is a key component of the system that regulates PBP1 localization during cell cycle progression. Its main role could be the removal of PBP1 from the cell pole after pole maturation is completed. Also contributes to the recruitment of PBP1 to the division complex. Not essential for septum formation. The sequence is that of Cell cycle protein GpsB from Streptococcus gordonii (strain Challis / ATCC 35105 / BCRC 15272 / CH1 / DL1 / V288).